The following is a 499-amino-acid chain: Maturase K (499 aa).

This sequence belongs to the intron maturase 2 family. MatK subfamily.

The protein localises to the plastid. Its subcellular location is the chloroplast. Usually encoded in the trnK tRNA gene intron. Probably assists in splicing its own and other chloroplast group II introns. The chain is Maturase K from Gleditsia triacanthos (Common honey-locust).